The primary structure comprises 332 residues: Stage II sporulation protein B (332 aa).

The span at Met-1–Ser-10 shows a compositional bias: basic residues. Positions Met-1 to Trp-71 are disordered. The span at Lys-11–Thr-27 shows a compositional bias: basic and acidic residues. Residues Ala-112–Ile-132 traverse the membrane as a helical segment. The interval Ser-139–Thr-174 is disordered. The segment covering Asp-161–Thr-174 has biased composition (polar residues). The 76-residue stretch at Glu-175–Glu-250 folds into the SPOR domain.

It is found in the cell membrane. With respect to regulation, appears to be degraded early in engulfment, in correlation with its loss from polar septa. Its function is as follows. Facilitates the rapid and spatially regulated dissolution of septal peptidoglycan. The sequence is that of Stage II sporulation protein B from Bacillus subtilis (strain 168).